A 396-amino-acid polypeptide reads, in one-letter code: Probable sugar efflux transporter (396 aa).

Transmembrane regions (helical) follow at residues 15 to 35 (VVTLAVAAFIFNTTEFVPVGL), 50 to 70 (VGIMLTIYAWVVALMSLPFML), 81 to 101 (LICLFVVFIASHVLSFLSWSF), 103 to 123 (VLVISRIGVAFAHAIFWSITA), 136 to 156 (AQALSLIATGTALAMVLGLPL), 170 to 190 (FFAIGIGALITLLCLIKLLPL), 209 to 229 (PALMSIYLLTVVVVTAHYTAY), 246 to 266 (FATALLLLLGGAGIIGSVIFG), 275 to 295 (ALVSTAIALLLVCLALLLPAA), 299 to 319 (IHLGVLSIFWGIAMMIIGLGM), 333 to 353 (VAMALFSGIFNIGIGAGALVG), and 364 to 384 (MIGYVGTVPAFAALIWSIIIF).

This sequence belongs to the major facilitator superfamily. SotB (TC 2.A.1.2) family.

Its subcellular location is the cell inner membrane. Involved in the efflux of sugars. The physiological role may be the reduction of the intracellular concentration of toxic sugars or sugar metabolites. The chain is Probable sugar efflux transporter from Escherichia coli O157:H7 (strain EC4115 / EHEC).